A 211-amino-acid chain; its full sequence is SOSS complex subunit B1 (211 aa).

A DNA-binding region (OB) is located at residues 22 to 92 (IVLETGRVTK…TLYTGRGGDL (71 aa)). The tract at residues 110 to 211 (EPNPEYSAQQ…GKETRRSSKR (102 aa)) is disordered. A compositionally biased stretch (polar residues) spans 115 to 128 (YSAQQAPNKTVQND). Composition is skewed to pro residues over residues 133–143 (APQPPTGPPAT) and 165–174 (PHPPHTPSHP).

It belongs to the SOSS-B family. SOSS-B1 subfamily. As to quaternary structure, component of the SOSS complex, composed of SOSS-B (SOSS-B1/NABP2 or SOSS-B2/NABP1), SOSS-A/INTS3 and SOSS-C/INIP. SOSS complexes containing SOSS-B1/NABP2 are more abundant than complexes containing SOSS-B2/NABP1. Directly interacts with ATM, SOSS-A/INTS3 and RAD51. Interacts with INTS7. Phosphorylated by ATM in response to DNA damage. Phosphorylation prevents degradation by the proteasome, hence stabilization of the protein and accumulation within cells. In terms of processing, ubiquitinated in a FBXL5-dependent manner, leading to proteasomal degradation.

The protein resides in the nucleus. Its function is as follows. Component of the SOSS complex, a multiprotein complex that functions downstream of the MRN complex to promote DNA repair and G2/M checkpoint. In the SOSS complex, acts as a sensor of single-stranded DNA that binds to single-stranded DNA, in particular to polypyrimidines. The SOSS complex associates with DNA lesions and influences diverse endpoints in the cellular DNA damage response including cell-cycle checkpoint activation, recombinational repair and maintenance of genomic stability. Required for efficient homologous recombination-dependent repair of double-strand breaks (DSBs) and ATM-dependent signaling pathways. The polypeptide is SOSS complex subunit B1 (NABP2) (Bos taurus (Bovine)).